A 246-amino-acid chain; its full sequence is tRNA pseudouridine synthase B (246 aa).

The active-site Nucleophile is the Asp44.

This sequence belongs to the pseudouridine synthase TruB family. Type 1 subfamily.

The catalysed reaction is uridine(55) in tRNA = pseudouridine(55) in tRNA. In terms of biological role, responsible for synthesis of pseudouridine from uracil-55 in the psi GC loop of transfer RNAs. The chain is tRNA pseudouridine synthase B from Desulfotalea psychrophila (strain LSv54 / DSM 12343).